Here is a 132-residue protein sequence, read N- to C-terminus: Small ribosomal subunit protein uS8 (132 aa).

The protein belongs to the universal ribosomal protein uS8 family. Part of the 30S ribosomal subunit. Contacts proteins S5 and S12.

One of the primary rRNA binding proteins, it binds directly to 16S rRNA central domain where it helps coordinate assembly of the platform of the 30S subunit. The sequence is that of Small ribosomal subunit protein uS8 from Rickettsia akari (strain Hartford).